A 360-amino-acid chain; its full sequence is 3-dehydroquinate synthase (360 aa).

Residues 69-74, 103-107, 127-128, Lys140, Lys149, and 167-170 each bind NAD(+); these read DGEAYK, GVIGD, TT, and CLQT. Zn(2+) is bound by residues Glu182, His245, and His262.

Belongs to the sugar phosphate cyclases superfamily. Dehydroquinate synthase family. Co(2+) serves as cofactor. Zn(2+) is required as a cofactor. Requires NAD(+) as cofactor.

Its subcellular location is the cytoplasm. It catalyses the reaction 7-phospho-2-dehydro-3-deoxy-D-arabino-heptonate = 3-dehydroquinate + phosphate. It functions in the pathway metabolic intermediate biosynthesis; chorismate biosynthesis; chorismate from D-erythrose 4-phosphate and phosphoenolpyruvate: step 2/7. Catalyzes the conversion of 3-deoxy-D-arabino-heptulosonate 7-phosphate (DAHP) to dehydroquinate (DHQ). The chain is 3-dehydroquinate synthase from Aeromonas hydrophila subsp. hydrophila (strain ATCC 7966 / DSM 30187 / BCRC 13018 / CCUG 14551 / JCM 1027 / KCTC 2358 / NCIMB 9240 / NCTC 8049).